A 967-amino-acid chain; its full sequence is Mediator of RNA polymerase II transcription subunit 14 (967 aa).

The protein belongs to the Mediator complex subunit 14 family. Component of the Mediator complex.

The protein resides in the nucleus. In terms of biological role, component of the Mediator complex, a coactivator involved in the regulated transcription of nearly all RNA polymerase II-dependent genes. Mediator functions as a bridge to convey information from gene-specific regulatory proteins to the basal RNA polymerase II transcription machinery. Mediator is recruited to promoters by direct interactions with regulatory proteins and serves as a scaffold for the assembly of a functional preinitiation complex with RNA polymerase II and the general transcription factors. This Eremothecium gossypii (strain ATCC 10895 / CBS 109.51 / FGSC 9923 / NRRL Y-1056) (Yeast) protein is Mediator of RNA polymerase II transcription subunit 14 (RGR1).